The chain runs to 134 residues: Loki profilin-1 (134 aa).

The interval 55–62 (LALGKKGI) is loki loop.

Belongs to the Asgard profilin family.

Its subcellular location is the cytoplasm. The protein resides in the cytoskeleton. With respect to regulation, inhibition of rabbit actin polymerization is reduced by phosphatidylinositol-(4,5)-P2(1,2-dipalmitoyl), a soluble form of the phospholipid phosphatidylinositol, suggesting an unknown lipid might regulate actin-profilin interaction in vivo. Binds to actin and affects the structure of the cytoskeleton. At high concentrations inhibits spontaneous rabbit actin nucleation. This strongly suggests this archaea has a profilin-regulated actin system, and actin-type genes can be identified in this organism. The protein is Loki profilin-1 of Lokiarchaeum sp. (strain GC14_75).